The chain runs to 164 residues: UPF0304 protein YPDSF_1971 (164 aa).

Belongs to the UPF0304 family.

This is UPF0304 protein YPDSF_1971 from Yersinia pestis (strain Pestoides F).